The sequence spans 152 residues: Flagellar assembly factor FliW (152 aa).

It belongs to the FliW family. In terms of assembly, interacts with translational regulator CsrA and flagellin(s).

The protein localises to the cytoplasm. In terms of biological role, acts as an anti-CsrA protein, binds CsrA and prevents it from repressing translation of its target genes, one of which is flagellin. Binds to flagellin and participates in the assembly of the flagellum. The polypeptide is Flagellar assembly factor FliW (Desulfitobacterium hafniense (strain Y51)).